The chain runs to 275 residues: Penicillin-insensitive murein endopeptidase (275 aa).

The signal sequence occupies residues 1–19; it reads MKNWIVGMVALVTMVPVMA. Intrachain disulfides connect Cys44–Cys264, Cys187–Cys235, and Cys216–Cys223. The Zn(2+) site is built by His110, His113, Asp120, Asp147, and His211. The segment at 227 to 262 is disordered; the sequence is DTPPPGDGCGAELESWFQPPPPSAKPGKTLPPPLPP. Residues 244 to 262 are compositionally biased toward pro residues; sequence QPPPPSAKPGKTLPPPLPP.

Belongs to the peptidase M74 family. As to quaternary structure, dimer. The cofactor is Zn(2+).

It is found in the periplasm. Murein endopeptidase that cleaves the D-alanyl-meso-2,6-diamino-pimelyl amide bond that connects peptidoglycan strands. Likely plays a role in the removal of murein from the sacculus. The polypeptide is Penicillin-insensitive murein endopeptidase (Yersinia pestis).